A 284-amino-acid polypeptide reads, in one-letter code: CBY1-interacting BAR domain-containing protein 1-A (284 aa).

A mitochondrion-targeting transit peptide spans 1–48 (MSQTPEARARDNQTRQIQESVNNVEKHFGELCQIFAGYVRKTARLRDK). Residues 11–221 (DNQTRQIQES…DIDEEEDLEV (211 aa)) are BAR-like. Coiled coils occupy residues 142–184 (RQII…IKKL) and 260–284 (NRQK…EDEN). A compositionally biased stretch (polar residues) spans 242-261 (SRTGSTSRGPSVISQPPGNR). Residues 242-284 (SRTGSTSRGPSVISQPPGNRQKNRIEDEDEEEEDDENSTEDEN) form a disordered region. A compositionally biased stretch (acidic residues) spans 267 to 284 (EDEDEEEEDDENSTEDEN).

It belongs to the CIBAR family.

It is found in the cytoplasm. Its subcellular location is the cytoskeleton. The protein localises to the microtubule organizing center. It localises to the centrosome. The protein resides in the centriole. It is found in the nucleus. Its subcellular location is the mitochondrion inner membrane. The protein localises to the cell projection. It localises to the cilium. The protein resides in the flagellum. Plays a critical role in regulating mitochondrial ultrastructure and function by maintaining the integrity of mitochondrial morphology, particularly the organization of cristae. Plays a crucial role in ciliogenesis. Plays a key role in the correct positioning of the annulus, a septin-based ring structure in the sperm flagellum, serving both as a physical barrier and a membrane diffusion barrier that separates the midpiece (MP) from the principal piece (PP). This is CBY1-interacting BAR domain-containing protein 1-A from Xenopus laevis (African clawed frog).